We begin with the raw amino-acid sequence, 562 residues long: Dihydroxy-acid dehydratase (562 aa).

Mg(2+) is bound at residue Asp80. Cys121 is a binding site for [2Fe-2S] cluster. Mg(2+) contacts are provided by Asp122 and Lys123. Lys123 is modified (N6-carboxylysine). Cys194 serves as a coordination point for [2Fe-2S] cluster. Glu446 lines the Mg(2+) pocket. Ser472 serves as the catalytic Proton acceptor.

It belongs to the IlvD/Edd family. Homodimer. The cofactor is [2Fe-2S] cluster. Requires Mg(2+) as cofactor.

The catalysed reaction is (2R)-2,3-dihydroxy-3-methylbutanoate = 3-methyl-2-oxobutanoate + H2O. It carries out the reaction (2R,3R)-2,3-dihydroxy-3-methylpentanoate = (S)-3-methyl-2-oxopentanoate + H2O. It participates in amino-acid biosynthesis; L-isoleucine biosynthesis; L-isoleucine from 2-oxobutanoate: step 3/4. The protein operates within amino-acid biosynthesis; L-valine biosynthesis; L-valine from pyruvate: step 3/4. Functionally, functions in the biosynthesis of branched-chain amino acids. Catalyzes the dehydration of (2R,3R)-2,3-dihydroxy-3-methylpentanoate (2,3-dihydroxy-3-methylvalerate) into 2-oxo-3-methylpentanoate (2-oxo-3-methylvalerate) and of (2R)-2,3-dihydroxy-3-methylbutanoate (2,3-dihydroxyisovalerate) into 2-oxo-3-methylbutanoate (2-oxoisovalerate), the penultimate precursor to L-isoleucine and L-valine, respectively. This is Dihydroxy-acid dehydratase from Staphylococcus aureus (strain USA300 / TCH1516).